The sequence spans 220 residues: MSDEKNKFTDASFENCDLKNPSDRDALKQAADKFLKAHAAEADADVKGGGEALVDPLAALQDENKELKDQLLRLAADMENLRRRTARDVADAKAYSIANFARDMLSVSDNLNRALDAIPEGAKENDAGLKTLAEGVEMTERAMIAALERHGVQKIHPEGQKFDPHFHQAMFEIPNSDVPDNTVQQVVQAGYIIGERVLRPAIVGVAKGGAKDISVESDSD.

The segment at 1–22 is disordered; the sequence is MSDEKNKFTDASFENCDLKNPS.

The protein belongs to the GrpE family. In terms of assembly, homodimer.

Its subcellular location is the cytoplasm. Functionally, participates actively in the response to hyperosmotic and heat shock by preventing the aggregation of stress-denatured proteins, in association with DnaK and GrpE. It is the nucleotide exchange factor for DnaK and may function as a thermosensor. Unfolded proteins bind initially to DnaJ; upon interaction with the DnaJ-bound protein, DnaK hydrolyzes its bound ATP, resulting in the formation of a stable complex. GrpE releases ADP from DnaK; ATP binding to DnaK triggers the release of the substrate protein, thus completing the reaction cycle. Several rounds of ATP-dependent interactions between DnaJ, DnaK and GrpE are required for fully efficient folding. The polypeptide is Protein GrpE (Bartonella henselae (strain ATCC 49882 / DSM 28221 / CCUG 30454 / Houston 1) (Rochalimaea henselae)).